The primary structure comprises 219 residues: MFFKIPQVLTPEALEKITTTLTEAEFVDGKLTAGWYAKLVKENQQLAKATPTAQALEEQVRQALQSNALFQTAIRPKTVHTLLFSRYGPGMAYGRHTDNALMNGMRSDVSFTLFLNEPSDYEGGELVIEGADSEQSYKLPAGTAIAYPSTSLHRVNVVTKGTRLVAVGWVQSWIRDAQKREIVFDLDVSRRSLFAQSGKTTEFDLLSKSVANLLRLWSE.

The Fe2OG dioxygenase domain maps to 78 to 172 (TVHTLLFSRY…RLVAVGWVQS (95 aa)). Fe cation-binding residues include H96, D98, and H153. Residue R163 participates in 2-oxoglutarate binding.

Fe(2+) is required as a cofactor. Requires L-ascorbate as cofactor.

In Picosynechococcus sp. (strain ATCC 27264 / PCC 7002 / PR-6) (Agmenellum quadruplicatum), this protein is PKHD-type hydroxylase SYNPCC7002_A2658.